Here is a 459-residue protein sequence, read N- to C-terminus: Serine--tRNA ligase (459 aa).

Thr-254–Glu-256 is a binding site for L-serine. ATP is bound by residues Arg-285–Glu-287 and Val-301. An L-serine-binding site is contributed by Glu-308. Residue Glu-372–Ser-375 coordinates ATP. Thr-408 contacts L-serine.

Belongs to the class-II aminoacyl-tRNA synthetase family. Type-1 seryl-tRNA synthetase subfamily. Homodimer. The tRNA molecule binds across the dimer.

It localises to the cytoplasm. The catalysed reaction is tRNA(Ser) + L-serine + ATP = L-seryl-tRNA(Ser) + AMP + diphosphate + H(+). It catalyses the reaction tRNA(Sec) + L-serine + ATP = L-seryl-tRNA(Sec) + AMP + diphosphate + H(+). The protein operates within aminoacyl-tRNA biosynthesis; selenocysteinyl-tRNA(Sec) biosynthesis; L-seryl-tRNA(Sec) from L-serine and tRNA(Sec): step 1/1. Its function is as follows. Catalyzes the attachment of serine to tRNA(Ser). Is also able to aminoacylate tRNA(Sec) with serine, to form the misacylated tRNA L-seryl-tRNA(Sec), which will be further converted into selenocysteinyl-tRNA(Sec). The chain is Serine--tRNA ligase from Desulfurococcus amylolyticus (strain DSM 18924 / JCM 16383 / VKM B-2413 / 1221n) (Desulfurococcus kamchatkensis).